The chain runs to 342 residues: Heat-inducible transcription repressor HrcA (342 aa).

This sequence belongs to the HrcA family.

Its function is as follows. Negative regulator of class I heat shock genes (grpE-dnaK-dnaJ and groELS operons). Prevents heat-shock induction of these operons. The polypeptide is Heat-inducible transcription repressor HrcA (Geobacter sulfurreducens (strain ATCC 51573 / DSM 12127 / PCA)).